The following is an 890-amino-acid chain: DNA mismatch repair protein MutS (890 aa).

Residue 607–614 (GPNMSGKS) participates in ATP binding.

This sequence belongs to the DNA mismatch repair MutS family.

This protein is involved in the repair of mismatches in DNA. It is possible that it carries out the mismatch recognition step. This protein has a weak ATPase activity. The sequence is that of DNA mismatch repair protein MutS from Bacillus thuringiensis subsp. konkukian (strain 97-27).